A 2279-amino-acid chain; its full sequence is Zinc finger protein 318 (2279 aa).

Low complexity-rich tracts occupy residues 1–12 (MYRSSARSSVSS) and 25–39 (SGRS…ARRS). 2 disordered regions span residues 1–140 (MYRS…PGLC) and 164–189 (RRRL…LTDD). Positions 1–1092 (MYRSSARSSV…THMHNKKHTQ (1092 aa)) are interaction with AR. Serine 40 is modified (phosphoserine). A compositionally biased stretch (basic residues) spans 53 to 67 (PARRPRSPSGHRGRR). Phosphoserine occurs at positions 79 and 81. Basic and acidic residues predominate over residues 110 to 132 (SRGESRADYARDGRGDHPGDSGS). Phosphoserine is present on residues serine 136 and serine 173. Over residues 177 to 188 (NLEDMDRDDLTD) the composition is skewed to acidic residues. Tyrosine 205 bears the Phosphotyrosine mark. Phosphoserine occurs at positions 207 and 214. Disordered regions lie at residues 279–346 (TVKI…DGGG) and 397–416 (LESF…YSGH). Basic and acidic residues predominate over residues 311 to 333 (LDPEFRELDLARRKREEEEERSR). Residues 315 to 343 (FRELDLARRKREEEEERSRSLSQELVGVD) adopt a coiled-coil conformation. 4 positions are modified to phosphoserine: serine 464, serine 472, serine 501, and serine 527. Disordered regions lie at residues 514 to 533 (LADS…DIED) and 540 to 570 (GDEE…ASSL). Glycyl lysine isopeptide (Lys-Gly) (interchain with G-Cter in SUMO2) cross-links involve residues lysine 547, lysine 553, lysine 566, and lysine 578. A compositionally biased stretch (basic and acidic residues) spans 664–683 (FSADRRSSDPHRLESREAHH). The interval 664–709 (FSADRRSSDPHRLESREAHHSNTHSPEVSHPHPPSPVDPYLLTKNS) is disordered. Threonine 842 bears the Phosphothreonine mark. Residues 876-980 (EKISDEKNRA…SELDKVAQIL (105 aa)) adopt a coiled-coil conformation. 2 stretches are compositionally biased toward basic and acidic residues: residues 922-941 (QQGE…KDPL) and 989-1012 (QKSL…KSPE). 2 disordered regions span residues 922–942 (QQGE…DPLL) and 989–1051 (QKSL…TKQL). At serine 1010 the chain carries Phosphoserine. Over residues 1013 to 1023 (KVSSFSNSSSN) the composition is skewed to low complexity. The segment covering 1024-1034 (KESKVNNEKFR) has biased composition (basic and acidic residues). Serine 1037 carries the post-translational modification Phosphoserine. 2 consecutive Matrin-type zinc fingers follow at residues 1063-1097 (AGNH…LDPY) and 1136-1166 (FYCQ…KYKK). Composition is skewed to basic and acidic residues over residues 1195–1235 (RRQS…KLED), 1242–1251 (NSPEKAENKR), 1258–1267 (QLKEEVKKES), 1279–1288 (KKPEKEEEKS), and 1296–1316 (SKEE…EAGK). A disordered region spans residues 1195-1319 (RRQSELKRKL…GKTEAGKAKP (125 aa)). Residues serine 1243 and serine 1267 each carry the phosphoserine modification. The residue at position 1420 (serine 1420) is a Phosphoserine. Disordered regions lie at residues 1428 to 1463 (AEKS…HPAA), 1577 to 1628 (GKGA…EELH), 1702 to 1735 (SSFQ…PPQL), and 1753 to 1775 (ESVN…ESEI). The span at 1440–1462 (ILPPPPPPPPPPPPPPPVIPHPA) shows a compositional bias: pro residues. A compositionally biased stretch (low complexity) spans 1602–1623 (SNLSRTKSSDTSSTSPLNSSAS). The segment covering 1708-1719 (TSRDISPEKSEL) has biased composition (basic and acidic residues). Phosphoserine is present on serine 1713. The segment covering 1724–1734 (PGPPGVEPPPQ) has biased composition (pro residues). Residues 1768–1792 (EDCRESEIETNTELKERVKELSEGI) are a coiled coil. Serine 1856, serine 1896, serine 1971, serine 2030, serine 2035, serine 2091, serine 2101, serine 2189, serine 2192, and serine 2243 each carry phosphoserine. The interval 2252 to 2279 (DNMVPQGMPEQETTVGAIQDHTESSVHN) is disordered.

In terms of assembly, homodimer. Heterodimer of isoform 1 and isoform 2. Isoform 1 and isoform 2 interact with AR. Expressed in endocrine tissue.

The protein localises to the nucleus. Functionally, acts as a transcriptional corepressor for AR-mediated transactivation function. May act as a transcriptional regulator during spermatogenesis and, in particular, during meiotic division. In terms of biological role, acts as a transcriptional coactivator for AR-mediated transactivation function. May act as a transcriptional regulator during spermatogenesis and, in particular, during meiotic division. This is Zinc finger protein 318 (ZNF318) from Homo sapiens (Human).